Here is a 413-residue protein sequence, read N- to C-terminus: Tyrosine--tRNA ligase (413 aa).

The short motif at 59–68 (PTAPDIHIGH) is the 'HIGH' region element. The 'KMSKS' region signature appears at 243–247 (KMSKS). An ATP-binding site is contributed by lysine 246. Positions 351–411 (LAIGQLLKQA…GKRRFARVTL (61 aa)) constitute an S4 RNA-binding domain.

It belongs to the class-I aminoacyl-tRNA synthetase family. TyrS type 2 subfamily. Homodimer.

It is found in the cytoplasm. The catalysed reaction is tRNA(Tyr) + L-tyrosine + ATP = L-tyrosyl-tRNA(Tyr) + AMP + diphosphate + H(+). In terms of biological role, catalyzes the attachment of tyrosine to tRNA(Tyr) in a two-step reaction: tyrosine is first activated by ATP to form Tyr-AMP and then transferred to the acceptor end of tRNA(Tyr). The chain is Tyrosine--tRNA ligase from Burkholderia lata (strain ATCC 17760 / DSM 23089 / LMG 22485 / NCIMB 9086 / R18194 / 383).